Here is an 83-residue protein sequence, read N- to C-terminus: MGQIQYSDKYFDDTFEYRHVVLPPEVAKLLPKNRILSESEWRAIGVQQSRGWVHYAIHRPEPHIMLFRRPLNYQQEHQAQIAK.

It belongs to the CKS family. As to quaternary structure, interacts with CDKA-1, CYCD2-1 and AT4G14310.

Binds to the catalytic subunit of the cyclin dependent kinases and is essential for their biological function. This is Cyclin-dependent kinases regulatory subunit 2 (CKS2) from Arabidopsis thaliana (Mouse-ear cress).